We begin with the raw amino-acid sequence, 500 residues long: Glycerol kinase (500 aa).

Thr-13 serves as a coordination point for ADP. Residues Thr-13, Thr-14, and Ser-15 each contribute to the ATP site. Thr-13 contributes to the sn-glycerol 3-phosphate binding site. Arg-17 lines the ADP pocket. Sn-glycerol 3-phosphate contacts are provided by Arg-83, Glu-84, Tyr-135, and Asp-244. Arg-83, Glu-84, Tyr-135, Asp-244, and Gln-245 together coordinate glycerol. ADP is bound by residues Thr-266 and Gly-309. Thr-266, Gly-309, Gln-313, and Gly-410 together coordinate ATP. Gly-410 and Asn-414 together coordinate ADP.

The protein belongs to the FGGY kinase family.

It catalyses the reaction glycerol + ATP = sn-glycerol 3-phosphate + ADP + H(+). It functions in the pathway polyol metabolism; glycerol degradation via glycerol kinase pathway; sn-glycerol 3-phosphate from glycerol: step 1/1. With respect to regulation, inhibited by fructose 1,6-bisphosphate (FBP). In terms of biological role, key enzyme in the regulation of glycerol uptake and metabolism. Catalyzes the phosphorylation of glycerol to yield sn-glycerol 3-phosphate. In Burkholderia ambifaria (strain MC40-6), this protein is Glycerol kinase.